The primary structure comprises 348 residues: MKNLLGSSVKDLENVALEYGQAAFRGRQIHNWIYNYRNKKKSIDQIEALPLDFRKKLKDDGFKLSELSVQERNLANDGTLKLLLSANDNESIECVGIPTEKRLTACLSSQVGCPMDCKFCATGKEGLKRSLKASEILDQILFIENEMNRKVTNIVFMGMGEPLLNIDDLLVSIRSINKDFQISQRKITVSTVAVPKMINKLSAKSFQILGNCQFTLAISLHASNQKIRETIIPSAKNYEIENIIEDCKQYVRDTGRRVSFEYLMLSGVNDKLEHANELSNLLRGFQCHVNLIQYNQIDEVEFQRTSLKSLQSFQSRLSHNGIAVSLRKSRGLDKNAACGQLRQNANHQ.

Glutamate 93 serves as the catalytic Proton acceptor. Positions 99–333 constitute a Radical SAM core domain; it reads TEKRLTACLS…VSLRKSRGLD (235 aa). Cysteine 106 and cysteine 338 are joined by a disulfide. 3 residues coordinate [4Fe-4S] cluster: cysteine 113, cysteine 117, and cysteine 120. Residues 160 to 161, serine 190, 219 to 221, and asparagine 295 each bind S-adenosyl-L-methionine; these read GE and SLH. Cysteine 338 (S-methylcysteine intermediate) is an active-site residue.

Belongs to the radical SAM superfamily. RlmN family. It depends on [4Fe-4S] cluster as a cofactor.

The protein localises to the cytoplasm. It carries out the reaction adenosine(2503) in 23S rRNA + 2 reduced [2Fe-2S]-[ferredoxin] + 2 S-adenosyl-L-methionine = 2-methyladenosine(2503) in 23S rRNA + 5'-deoxyadenosine + L-methionine + 2 oxidized [2Fe-2S]-[ferredoxin] + S-adenosyl-L-homocysteine. The enzyme catalyses adenosine(37) in tRNA + 2 reduced [2Fe-2S]-[ferredoxin] + 2 S-adenosyl-L-methionine = 2-methyladenosine(37) in tRNA + 5'-deoxyadenosine + L-methionine + 2 oxidized [2Fe-2S]-[ferredoxin] + S-adenosyl-L-homocysteine. Functionally, specifically methylates position 2 of adenine 2503 in 23S rRNA and position 2 of adenine 37 in tRNAs. The sequence is that of Probable dual-specificity RNA methyltransferase RlmN from Prochlorococcus marinus (strain MIT 9215).